The chain runs to 137 residues: Cofilin-1A (137 aa).

Positions 2–135 (SSGIALAPNC…KDSCFYEKCT (134 aa)) constitute an ADF-H domain.

Belongs to the actin-binding proteins ADF family.

The protein localises to the nucleus matrix. It is found in the cytoplasm. Its subcellular location is the cytoskeleton. Controls reversibly actin polymerization and depolymerization in a pH-sensitive manner. It has the ability to bind G- and F-actin in a 1:1 ratio of cofilin to actin. It is the major component of intranuclear and cytoplasmic actin rods. In Dictyostelium discoideum (Social amoeba), this protein is Cofilin-1A (cofA).